A 137-amino-acid polypeptide reads, in one-letter code: Small ribosomal subunit protein bS6 (137 aa).

A disordered region spans residues 96-137 (ITEASPMAKAKDERDTRRSSEERAPRAEATEEVKESAENTAE). Basic and acidic residues predominate over residues 104–137 (KAKDERDTRRSSEERAPRAEATEEVKESAENTAE).

It belongs to the bacterial ribosomal protein bS6 family.

In terms of biological role, binds together with bS18 to 16S ribosomal RNA. This is Small ribosomal subunit protein bS6 from Shewanella piezotolerans (strain WP3 / JCM 13877).